The chain runs to 314 residues: Acetaldehyde dehydrogenase 2 (314 aa).

NAD(+) is bound at residue 15 to 18; the sequence is SGNI. The active-site Acyl-thioester intermediate is the Cys133. NAD(+) is bound by residues 164-172 and Asn289; that span reads SAGPGTRQN.

The protein belongs to the acetaldehyde dehydrogenase family.

It carries out the reaction acetaldehyde + NAD(+) + CoA = acetyl-CoA + NADH + H(+). This is Acetaldehyde dehydrogenase 2 from Nocardioides sp. (strain ATCC BAA-499 / JS614).